Here is a 401-residue protein sequence, read N- to C-terminus: MEQGLKISTPNAKLVRGAVLLPSDKYVFHLIQSRTLCMALSMPGEYLPAPVLFDRFEGGSSGECSLHSRQNVCLYLVRILLSKHPYVLNSQLLVGYQHRQEAVVLYKQLLVKTKDFGISEIKLPCSIVVGPNPMSAEGTVQAERELPSCELVITSEFKTVWINESANQEKEFSPHDAISIPLAPGTPSKPIIKQPPFLPISKETAILHAQLFYAAGAGFPPIHNCPASAFTTLAVMCKSHNSINLVPELEIKPRQLLLLKHVLLTRMGLENCLQDFIQAYAERLPPLADEQVKYFEKVLGTAKDRAEDIIFILNSVGATSFTNRICSSNTDPMLTKAMQKYFLMFPPADPINALPFAVDIISIICQGANFNTVVLFVQRYIKIQERAAKTNQIKMFALLSI.

Belongs to the herpesviridae BTRF1 family.

This is an uncharacterized protein from Connochaetes taurinus (Blue wildebeest).